We begin with the raw amino-acid sequence, 364 residues long: Dihydroflavonol 4-reductase (364 aa).

NADP(+)-binding residues include Lys45 and Tyr164.

The protein belongs to the NAD(P)-dependent epimerase/dehydratase family. Dihydroflavonol-4-reductase subfamily.

The enzyme catalyses a (2R,3S,4S)-leucoanthocyanidin + NADP(+) = a (2R,3R)-dihydroflavonol + NADPH + H(+). It carries out the reaction (2S)-flavan-4-ol + NADP(+) = (2S)-flavanone + NADPH + H(+). Its pathway is pigment biosynthesis; anthocyanin biosynthesis. In terms of biological role, bifunctional enzyme involved in flavonoid metabolism. The chain is Dihydroflavonol 4-reductase (F) from Callistephus chinensis (China aster).